A 111-amino-acid polypeptide reads, in one-letter code: Large ribosomal subunit protein P2w (111 aa).

The interval 63-111 is disordered; sequence ASVPSGGGVAVSAAPSSGGGGAAAPAEKKEAKKEEKEESDDDMGFSLFE. Positions 88–98 are enriched in basic and acidic residues; it reads AEKKEAKKEEK. A Phosphoserine modification is found at Ser-101.

The protein belongs to the eukaryotic ribosomal protein P1/P2 family. P1 and P2 exist as dimers at the large ribosomal subunit.

Plays an important role in the elongation step of protein synthesis. This is Large ribosomal subunit protein P2w (RPP2D) from Arabidopsis thaliana (Mouse-ear cress).